The chain runs to 115 residues: Methylmalonyl-CoA decarboxylase subunit delta (115 aa).

A helical membrane pass occupies residues 11–31 (WLIMAINMTVVFAVLIALGIL). The segment at 46–70 (EAPAATAPVATPTATPVAPANASAQ) is disordered. Over residues 48 to 65 (PAATAPVATPTATPVAPA) the composition is skewed to low complexity.

It belongs to the OadG family. In terms of assembly, the methylmalonyl-CoA decarboxylase is composed of five subunits: the carboxyltransferase alpha subunit (MmdA), the tunnel beta subunit (MmdB), the biotin-containing gamma subunit (MmdC), and the delta (MmdD) and epsilon (MmdE) subunits. In terms of processing, the N-terminus is blocked.

It localises to the cell membrane. The enzyme catalyses (S)-methylmalonyl-CoA + Na(+)(in) + H(+)(out) = propanoyl-CoA + Na(+)(out) + CO2. With respect to regulation, completely inhibited by avidin. Its function is as follows. Subunit of the sodium ion pump methylmalonyl-CoA decarboxylase, which converts the chemical energy of a decarboxylation reaction into an electrochemical gradient of Na(+) ions across the cytoplasmic membrane, thereby creating a sodium ion motive force that is used for ATP synthesis. The delta subunit is required for catalytic activity as well as for the proper assembly of the individual subunits to an enzyme complex. Can also convert malonyl-CoA into acetyl-CoA. In Veillonella parvula (Staphylococcus parvulus), this protein is Methylmalonyl-CoA decarboxylase subunit delta.